Consider the following 317-residue polypeptide: Multivesicular body subunit 12B (317 aa).

A disordered region spans residues 1-49 (MRSCFCVRRSRDPPPPQPPPPQRGTDQATMPEVKELSEALPETPMDPIT). Pro residues predominate over residues 13-22 (PPPPQPPPPQ). One can recognise an MABP domain in the interval 45 to 191 (MDPITGVGVV…SMGIWYRMGR (147 aa)). Ser-99 is subject to Phosphoserine. Phosphothreonine is present on residues Thr-120, Thr-202, and Thr-203. The interval 193–218 (PRNHDSSQPTTPSQSSASSTPAPNLP) is disordered. Positions 198 to 214 (SSQPTTPSQSSASSTPA) are enriched in low complexity. Ser-222 bears the Phosphoserine mark. The UMA domain occupies 252-301 (MDGVPFMISEKFSCIPESMQPFDLLGITIKSLAEIEKEYEYSFRTEQSAA). A disordered region spans residues 297-317 (EQSAAARLPPSPTRCQQIPQS). The residue at position 307 (Ser-307) is a Phosphoserine.

The protein belongs to the MVB12 family. Component of the ESCRT-I complex (endosomal sorting complex required for transport I) which consists of TSG101, VPS28, a VPS37 protein (VPS37A to -D) and MVB12A or MVB12B in a 1:1:1:1 stoichiometry. Interacts with TSG101; the association appears to be mediated by the TSG101-VPS37 binary subcomplex. Interacts with VPS28. Interacts with VPS37B; the association appears to be mediated by the TSG101-VPS37 binary subcomplex. Interacts with VPS37C; the association appears to be mediated by the TSG101-VPS37 binary subcomplex.

It is found in the endosome. Its subcellular location is the late endosome membrane. In terms of biological role, component of the ESCRT-I complex, a regulator of vesicular trafficking process. Required for the sorting of endocytic ubiquitinated cargos into multivesicular bodies. The chain is Multivesicular body subunit 12B (Mvb12b) from Mus musculus (Mouse).